The primary structure comprises 134 residues: Small ribosomal subunit protein bS6 (134 aa).

A disordered region spans residues 97-134; the sequence is TDVSPIKASEGREDRRSAPQREERNHDNSDEVSEESED. Positions 105–125 are enriched in basic and acidic residues; the sequence is SEGREDRRSAPQREERNHDNS.

It belongs to the bacterial ribosomal protein bS6 family.

Functionally, binds together with bS18 to 16S ribosomal RNA. This Marinomonas sp. (strain MWYL1) protein is Small ribosomal subunit protein bS6.